Here is a 362-residue protein sequence, read N- to C-terminus: Probable S-adenosylmethionine-dependent methyltransferase At5g37970 (362 aa).

Residues tyrosine 19, cysteine 66, asparagine 71, aspartate 107, serine 136, and phenylalanine 137 each contribute to the S-adenosyl-L-homocysteine site. Mg(2+) contacts are provided by asparagine 175, glutamate 261, and phenylalanine 263.

This sequence belongs to the methyltransferase superfamily. Type-7 methyltransferase family. In terms of assembly, homodimer. Requires Mg(2+) as cofactor.

This is Probable S-adenosylmethionine-dependent methyltransferase At5g37970 from Arabidopsis thaliana (Mouse-ear cress).